The chain runs to 504 residues: GTPase Obg (504 aa).

Positions 2 to 159 constitute an Obg domain; it reads SQFVDRVVLH…KDVTLELKSM (158 aa). The segment at 68–88 is disordered; sequence AERGNNGAGDDRHGARGKDLT. The 181-residue stretch at 160–340 folds into the OBG-type G domain; it reads ADVGLVGFPS…LRFALMDIVR (181 aa). Residues 166–173, 191–195, 212–215, 292–295, and 321–323 each bind GTP; these read GFPSAGKS, FTTLA, DVPG, NKMD, and STV. S173 and T193 together coordinate Mg(2+). An OCT domain is found at 364–444; the sequence is KRKGRFADFE…IGGITFEWDP (81 aa). Residues 449–481 form a disordered region; that stretch reads GVDQTPAYGRGKDRRLEQTDRVTAEQRKRASQA. Over residues 458–476 the composition is skewed to basic and acidic residues; sequence RGKDRRLEQTDRVTAEQRK.

The protein belongs to the TRAFAC class OBG-HflX-like GTPase superfamily. OBG GTPase family. As to quaternary structure, monomer. Requires Mg(2+) as cofactor.

It is found in the cytoplasm. In terms of biological role, an essential GTPase which binds GTP, GDP and possibly (p)ppGpp with moderate affinity, with high nucleotide exchange rates and a fairly low GTP hydrolysis rate. Plays a role in control of the cell cycle, stress response, ribosome biogenesis and in those bacteria that undergo differentiation, in morphogenesis control. The protein is GTPase Obg of Corynebacterium urealyticum (strain ATCC 43042 / DSM 7109).